The primary structure comprises 132 residues: Insulin-like 3 (132 aa).

The N-terminal stretch at 1 to 24 is a signal peptide; it reads MSPRPLAWALVLLGAALAVALALG. Disulfide bonds link C36-C117, C48-C130, and C116-C121. The propeptide at 61–104 is c peptide like; it reads VAGGDRELLQWLEGRHLHGQVSDGDPMLVLVPQALPQASLHHHH.

The protein belongs to the insulin family. In terms of assembly, heterodimer of a B chain and an A chain linked by two disulfide bonds. In terms of tissue distribution, more strongly expressed in testis than in ovary.

Its subcellular location is the secreted. Seems to play a role in testicular function. May be a trophic hormone with a role in testicular descent in fetal life. Is a ligand for LGR8 receptor. This chain is Insulin-like 3 (INSL3), found in Canis lupus familiaris (Dog).